The primary structure comprises 220 residues: 2-hydroxy-3-keto-5-methylthiopentenyl-1-phosphate phosphatase (220 aa).

This sequence belongs to the HAD-like hydrolase superfamily. MtnX family.

It carries out the reaction 2-hydroxy-5-methylsulfanyl-3-oxopent-1-enyl phosphate + H2O = 1,2-dihydroxy-5-(methylsulfanyl)pent-1-en-3-one + phosphate. It participates in amino-acid biosynthesis; L-methionine biosynthesis via salvage pathway; L-methionine from S-methyl-5-thio-alpha-D-ribose 1-phosphate: step 4/6. Functionally, dephosphorylates 2-hydroxy-3-keto-5-methylthiopentenyl-1-phosphate (HK-MTPenyl-1-P) yielding 1,2-dihydroxy-3-keto-5-methylthiopentene (DHK-MTPene). The polypeptide is 2-hydroxy-3-keto-5-methylthiopentenyl-1-phosphate phosphatase (Geobacillus thermodenitrificans (strain NG80-2)).